A 474-amino-acid polypeptide reads, in one-letter code: MSKKLLIKTWGCQMNEYDSSKMADLLNAANGYELTEEPEEADVLLLNTCSIREKAQEKVFHQLGRWKTLKDKKPGVVIGVGGCVATQEGDHIRQRAPYVDVIFGPQTLHRLPEMIKQSQSDEAPVMDISFPEIEKFDRLPEPRAEGATAFVSIMEGCSKYCTYCVVPYTRGEEVSRPMDDVLFEIAQLADQGVREVNLLGQNVNAYRGPMHDGEICSFAELLRLVASIDGIDRIRFTTSHPLEFTDDIIAVYEDTPELVSFLHLPVQSGSDRVLTMMKRPHTGIEYKSIIRKLRKARPDIQISSDFIVGFPGETDKDFQDTMKLIKDVDFDMSFSFIFSPRPGTPAADYPCDLSEQVKKERLYELQQTVNTQAMRYSRQMLDTEQRVLVEGPSKKNLMELRARTENNRVVNFEGSADLIGQFVDVKITDVFANSLRGELVRTEKDMDLRSVISPTQMMAKTRREDELGVATFTP.

One can recognise an MTTase N-terminal domain in the interval Lys-3–Ser-120. Cys-12, Cys-49, Cys-83, Cys-157, Cys-161, and Cys-164 together coordinate [4Fe-4S] cluster. In terms of domain architecture, Radical SAM core spans Arg-143–Arg-375. The TRAM domain occupies Arg-378–Arg-441.

Belongs to the methylthiotransferase family. MiaB subfamily. As to quaternary structure, monomer. It depends on [4Fe-4S] cluster as a cofactor.

The protein localises to the cytoplasm. The enzyme catalyses N(6)-dimethylallyladenosine(37) in tRNA + (sulfur carrier)-SH + AH2 + 2 S-adenosyl-L-methionine = 2-methylsulfanyl-N(6)-dimethylallyladenosine(37) in tRNA + (sulfur carrier)-H + 5'-deoxyadenosine + L-methionine + A + S-adenosyl-L-homocysteine + 2 H(+). Its function is as follows. Catalyzes the methylthiolation of N6-(dimethylallyl)adenosine (i(6)A), leading to the formation of 2-methylthio-N6-(dimethylallyl)adenosine (ms(2)i(6)A) at position 37 in tRNAs that read codons beginning with uridine. This is tRNA-2-methylthio-N(6)-dimethylallyladenosine synthase from Vibrio campbellii (strain ATCC BAA-1116).